Reading from the N-terminus, the 882-residue chain is Protein PML (882 aa).

A disordered region spans residues 1 to 48 (MEPAPARSPRPQQDPARPQEPTMPPPETPSEGRQPSPSPSPTERAPAS). Position 8 is a phosphoserine; by HIPK2 (Ser8). Ser36 and Ser38 each carry phosphoserine; by HIPK2 and MAPK1. Phosphoserine is present on Ser48. Cys57 and Cys60 together coordinate Zn(2+). The RING-type zinc-finger motif lies at 57–92 (CQQCQAEAKCPKLLPCLHTLCSGCLEASGMQCPICQ). Lys65 is covalently cross-linked (Glycyl lysine isopeptide (Lys-Gly) (interchain with G-Cter in SUMO1); alternate). Lys65 is covalently cross-linked (Glycyl lysine isopeptide (Lys-Gly) (interchain with G-Cter in SUMO2); alternate). Residues Cys72, His74, Cys77, Cys80, Cys88, and Cys91 each contribute to the Zn(2+) site. At Ser117 the chain carries Phosphoserine; by CHEK2. Residues 124-166 (DAQAVCTRCKESADFWCFECEQLLCAKCFEAHQWFLKHEARPL) form a B box-type 1; atypical zinc finger. Zn(2+)-binding residues include Cys129, Cys132, Cys151, and His155. Lys160 participates in a covalent cross-link: Glycyl lysine isopeptide (Lys-Gly) (interchain with G-Cter in SUMO1); alternate. Lys160 participates in a covalent cross-link: Glycyl lysine isopeptide (Lys-Gly) (interchain with G-Cter in SUMO2); alternate. A Glycyl lysine isopeptide (Lys-Gly) (interchain with G-Cter in SUMO1P1/SUMO5); alternate cross-link involves residue Lys160. The segment at 183 to 236 (KTNNIFCSNPNHRTPTLTSIYCRGCSKPLCCSCALLDSSHSELKCDISAEIQQR) adopts a B box-type 2 zinc-finger fold. Residues Cys189, His194, Cys215, and His222 each contribute to the Zn(2+) site. The stretch at 228 to 253 (DISAEIQQRQEELDAMTQALQEQDSA) forms a coiled coil. A Glycyl lysine isopeptide (Lys-Gly) (interchain with G-Cter in SUMO2); alternate cross-link involves residue Lys380. Residue Lys380 forms a Glycyl lysine isopeptide (Lys-Gly) (interchain with G-Cter in /SUMO5); alternate linkage. Residue Lys380 forms a Glycyl lysine isopeptide (Lys-Gly) (interchain with G-Cter in ubiquitin); alternate linkage. A Glycyl lysine isopeptide (Lys-Gly) (interchain with G-Cter in SUMO2) cross-link involves residue Lys394. A Glycyl lysine isopeptide (Lys-Gly) (interchain with G-Cter in SUMO1P1/SUMO5); alternate cross-link involves residue Lys400. Residues Lys400 and Lys401 each participate in a glycyl lysine isopeptide (Lys-Gly) (interchain with G-Cter in ubiquitin); alternate cross-link. Residue Lys401 forms a Glycyl lysine isopeptide (Lys-Gly) (interchain with G-Cter in SUMO2); alternate linkage. The residue at position 403 (Ser403) is a Phosphoserine; by MAPK1 and MAPK7. Positions 448–555 (GAHPVPVYAF…ASGAGEAEER (108 aa)) are interaction with PER2. Lys460 participates in a covalent cross-link: Glycyl lysine isopeptide (Lys-Gly) (interchain with G-Cter in SUMO2). The interval 467-589 (DVSNTTTAQK…SESSDLQLEG (123 aa)) is disordered. The span at 468–484 (VSNTTTAQKRKCSQTQC) shows a compositional bias: polar residues. Lys476 is covalently cross-linked (Glycyl lysine isopeptide (Lys-Gly) (interchain with G-Cter in SUMO2); alternate). Residue Lys476 forms a Glycyl lysine isopeptide (Lys-Gly) (interchain with G-Cter in ubiquitin); alternate linkage. Positions 476–490 (KRKCSQTQCPRKVIK) match the Nuclear localization signal motif. Residue Lys478 forms a Glycyl lysine isopeptide (Lys-Gly) (interchain with G-Cter in SUMO2) linkage. Glycyl lysine isopeptide (Lys-Gly) (interchain with G-Cter in SUMO2); alternate cross-links involve residues Lys487 and Lys490. An N6-acetyllysine; alternate modification is found at Lys487. Positions 489-501 (IKMESEEGKEARL) are enriched in basic and acidic residues. A Glycyl lysine isopeptide (Lys-Gly) (interchain with G-Cter in SUMO1); alternate cross-link involves residue Lys490. A Glycyl lysine isopeptide (Lys-Gly) (interchain with G-Cter in SUMO1P1/SUMO5); alternate cross-link involves residue Lys490. A Phosphoserine modification is found at Ser493. Lys497 participates in a covalent cross-link: Glycyl lysine isopeptide (Lys-Gly) (interchain with G-Cter in SUMO1); alternate. Lys497 is covalently cross-linked (Glycyl lysine isopeptide (Lys-Gly) (interchain with G-Cter in SUMO2); alternate). Lys497 is covalently cross-linked (Glycyl lysine isopeptide (Lys-Gly) (interchain with G-Cter in SUMO1P1/SUMO5); alternate). Ser504 bears the Phosphoserine mark. Ser505 bears the Phosphoserine; by MAPK1 mark. Positions 505 to 516 (SPEQPRPSTSKA) are enriched in polar residues. Ser512 is modified (phosphoserine). Residue Lys515 is modified to N6-acetyllysine. Phosphoserine occurs at positions 518, 527, and 530. Phosphoserine; by CDK1 and CDK2 is present on Ser518. Residues Ser527 and Ser530 each carry the phosphoserine; by MAPK1 modification. The sumo interaction motif (SIM) stretch occupies residues 556-562 (VVVISSS). The residue at position 565 (Ser565) is a Phosphoserine. Phosphoserine; by CK2 is present on Ser565. The residue at position 867 (Thr867) is a Phosphothreonine.

Key component of PML bodies. PML bodies are formed by the interaction of PML homodimers (via SUMO-binding motif) with sumoylated PML, leading to the assembly of higher oligomers. Several types of PML bodies have been observed. PML bodies can form hollow spheres that can sequester target proteins inside. Interacts (via SUMO-binding motif) with sumoylated proteins. Interacts (via C-terminus) with p53/TP53. Recruits p53/TP53 and CHEK2 into PML bodies, which promotes p53/TP53 phosphorylation at 'Ser-20' and prevents its proteasomal degradation. Interacts with MDM2, and sequesters MDM2 in the nucleolus, thereby preventing ubiquitination of p53/TP53. Interaction with PML-RARA oncoprotein and certain viral proteins causes disassembly of PML bodies and abolishes the normal PML function. Interacts with HIPK2, TERT, SIRT1, TOPBP1, TRIM27 and TRIM69. Interacts with ELF4 (via C-terminus). Interacts with ITPR3. Interacts (in the cytoplasm) with TGFBR1, TGFBR2 and PKM. Interacts (via the coiled-coil domain and when sumoylated) with SATB1. Interacts with UBE2I; the interaction is enhanced by arsenic binding. Interacts (PML-RARA oncoprotein, via the coiled-coil domain) with UBE2I; the interaction is enhanced by arsenic binding and is required for PML-RARA oncoprotein sumoylation and inhibition of RARA transactivational activity. Interacts with RB1, PPP1A, SMAD2, SMAD3, DAXX, RPL11 and MTOR. Interacts with PPARGC1A and KAT2A. Interacts with CSNK2A1 and CSNK2A3. Interacts with ANKRD2; the interaction is direct. Interacts (via SUMO-interacting motif) with sumoylated MORC3. Isoform PML-1, isoform PML-2, isoform PML-3, isoform PML-4, isoform PML-5 and isoform PML-6 interact with RNF4. Isoform PML-1 interacts with NLRP3. Isoform PML-1, isoform PML-2, isoform PML-3, isoform PML-4 and isoform PML-5 interact with MAGEA2, RBL2, PER2 and E2F4. Isoform PML-2 interacts with CIITA. Isoform PML-2, isoform PML-3 and isoform PML-4 interact with TBX2. Isoform PML-4 interacts with RANBP2, HDAC7, KAT6A, WRN, PIN1, TBX3 and phosphorylated MAPK1/ERK2. Isoform PML-4 interacts with the CTNNB1 and TCF7L2/TCF4 complex. Isoform PML-4 preferentially interacts with MAPK7/BMK1 although other isoforms (isoform PML-1, isoform PML-2, isoform PML-3 and isoform PML-6) also interact with it. Isoform PML-12 interacts with PIAS1, PIAS2 (isoform PIAS2-alpha) and CSNK2A1/CK2. Interacts with TRIM16. Interacts with PRDM1/Blimp-1. Interacts (via RING-type zinc finger) with EIF4E; the interaction results in conformational changes of both interacting proteins and reduces EIF4E affinity for the 5' m7G cap of mRNA, thus reducing EIF4E-mediated mRNA nuclear export. As to quaternary structure, (Microbial infection) Interacts with Lassa virus Z protein and rabies virus phosphoprotein. In terms of assembly, (Microbial infection) Isoform PML-1 interacts with herpes simplex virus-1/HHV-1 ICP0. (Microbial infection) Isoform PML-2 interacts with human adenovirus 2 E1A and this interaction stimulates E1A-dependent transcriptional activation. As to quaternary structure, (Microbial infection) Isoform PML-4 interacts with VZV capsid protein VP26/ORF23 capsid protein. In terms of assembly, (Microbial infection) The sumoylated isoform PML-4 interacts with encephalomyocarditis virus (EMCV) RNA-directed RNA polymerase 3D-POL (P3D-POL). (Microbial infection) Isoform PML-6 interacts with moloney murine leukemia virus (MoMLV) integrase (IN) and reverse transcriptase (RT). As to quaternary structure, (Microbial infection) Isoform PML-4 and isoform PML-5 interact with human adenovirus 5 E1B-55K protein; these interactions promote efficient subnuclear targeting of E1B-55K to PML nuclear bodies. In terms of assembly, (Microbial infection) Isoform PML-3 interacts (via RING-type zinc finger) with human foamy virus bel1/tas and bet. (Microbial infection) Interacts with human cytomegalovirus (HHV-5) immediate early protein IE1; this interaction mediates PML desumoylation and PML-mediated sumoylation of IE1. Post-translationally, ubiquitinated; mediated by RNF4, RNF111, UHRF1, UBE3A/E6AP, BCR(KLHL20) E3 ubiquitin ligase complex E3 ligase complex, SIAH1 or SIAH2 and leading to subsequent proteasomal degradation. Ubiquitination by BCR(KLHL20) E3 ubiquitin ligase complex E3 ligase complex requires CDK1/2-mediated phosphorylation at Ser-518 which in turn is recognized by prolyl-isopeptidase PIN1 and PIN1-catalyzed isomerization further potentiates PML interaction with KLHL20. 'Lys-6'-, 'Lys-11'-, 'Lys-48'- and 'Lys-63'-linked polyubiquitination by RNF4 is polysumoylation-dependent. Ubiquitination by RNF111 is polysumoylation-dependent. Sumoylation regulates PML's: stability in response to extracellular or intracellular stimuli, transcription directly and indirectly, through sequestration of or dissociation of the transcription factors from PML-NBs, ability to regulate apoptosis and its anti-viral activities. It is also essential for: maintaining proper PML nuclear bodies (PML-NBs) structure and normal function, recruitment of components of PML-NBs, the turnover and retention of PML in PML-NBs and the integrity of PML-NBs. Undergoes 'Lys-11'-linked sumoylation. Sumoylation on all three sites (Lys-65, Lys-160 and Lys-490) is required for nuclear body formation. Sumoylation on Lys-160 is a prerequisite for sumoylation on Lys-65. Lys-65 and Lys-160 are sumoylated by PISA1 and PIAS2. PIAS1-mediated sumoylation of PML promotes its interaction with CSNK2A1/CK2 and phosphorylation at Ser-565 which in turn triggers its ubiquitin-mediated degradation. PIAS1-mediated sumoylation of PML-RARA promotes its ubiquitin-mediated degradation. The PML-RARA fusion protein requires the coiled-coil domain for sumoylation. Sumoylation at Lys-490 by RANBP2 is essential for the proper assembly of PML-NBs. SUMO1P1/SUMO5 conjugated PML at Lys-160, Lys-380, Lys-400, Lys-490 and Lys-497, but Lys-380, Lys-400 and Lys-497 are not key acceptor lysines. SUMO1P1/SUMO5 forms polymeric chain on Lys-160 of PML by successive conjugation at 'Lys-18'; facilitating recruitment of PML-NB components, which enlarges PML. SUMO1P1/SUMO5 conjugation of PML increases SUMO2/3 conjugation, which leads to the recruitment of RNF4 and ubiquitin-dependent disintegration of PML-NBs. SUMO1P1/SUMO5 monoconjugated Lys-490. DNA damage triggers its sumoylation while some but not all viral infections can abolish sumoylation. Desumoylated by SENP1, SENP2, SENP3, SENP5 and SENP6. Arsenic induces PML and PML-RARA polysumoylation and their subsequent RNF4-dependent ubiquitination and proteasomal degradation, and is used as treatment in acute promyelocytic leukemia (APL). The nuclear isoforms (isoform PML-1, isoform PML-2, isoform PML-3, isoform PML-4, isoform PML-5 and isoform PML-6) show an increased sumoylation in response to arsenic trioxide. The cytoplasmic isoform PML-7 is not sumoylated. In terms of processing, phosphorylation is a major regulatory mechanism that controls PML protein abundance and the number and size of PML nuclear bodies (PML-NBs). Phosphorylated in response to DNA damage, probably by ATR. HIPK2-mediated phosphorylation at Ser-8, Ser-36 and Ser-38 leads to increased accumulation of PML protein and its sumoylation and is required for the maximal pro-apoptotic activity of PML after DNA damage. CHEK2-mediated phosphorylation at Ser-117 is important for PML-mediated apoptosis following DNA damage. MAPK1-mediated phosphorylations at Ser-403, Ser-505, Ser-527 and Ser-530 and CDK1/2-mediated phosphorylation at Ser-518 promote PIN1-dependent PML degradation. CK2-mediated phosphorylation at Ser-565 primes PML ubiquitination via an unidentified ubiquitin ligase. Post-translationally, (Microbial infection) Upon infection with Epstein-Barr virus, phosphorylated by CK2. Viral EBNA1 increases the association of CK2 with PML proteins, which increases PML phosphorylation by CK2, triggering the USP7-dependent polyubiquitylation and degradation of PML. Acetylation at Lys-487 is essential for its nuclear localization. Deacetylated at Lys-487 by SIRT1 and this deacetylation promotes PML control of PER2 nuclear localization. In terms of processing, (Microbial infection) Immediate early protein IE1 of human cytomegalovirus (HHV-5) interferes with the sumoylation of PML. Immediate early protein IE1 inhibits PML de novo sumoylation. Post-translationally, (Microbial infection) Cleaved at two different sites by enterovirus 71 protease 3C, leading to impaired PML-Nuclear bodies formation.

It localises to the nucleus. It is found in the nucleoplasm. The protein localises to the cytoplasm. Its subcellular location is the PML body. The protein resides in the nucleolus. It localises to the endoplasmic reticulum membrane. It is found in the early endosome membrane. Its pathway is protein modification; protein sumoylation. Its function is as follows. Functions via its association with PML-nuclear bodies (PML-NBs) in a wide range of important cellular processes, including tumor suppression, transcriptional regulation, apoptosis, senescence, DNA damage response, and viral defense mechanisms. Acts as the scaffold of PML-NBs allowing other proteins to shuttle in and out, a process which is regulated by SUMO-mediated modifications and interactions. Inhibits EIF4E-mediated mRNA nuclear export by reducing EIF4E affinity for the 5' 7-methylguanosine (m7G) cap of target mRNAs. Isoform PML-4 has a multifaceted role in the regulation of apoptosis and growth suppression: activates RB1 and inhibits AKT1 via interactions with PP1 and PP2A phosphatases respectively, negatively affects the PI3K pathway by inhibiting MTOR and activating PTEN, and positively regulates p53/TP53 by acting at different levels (by promoting its acetylation and phosphorylation and by inhibiting its MDM2-dependent degradation). Isoform PML-4 also: acts as a transcriptional repressor of TBX2 during cellular senescence and the repression is dependent on a functional RBL2/E2F4 repressor complex, regulates double-strand break repair in gamma-irradiation-induced DNA damage responses via its interaction with WRN, acts as a negative regulator of telomerase by interacting with TERT, and regulates PER2 nuclear localization and circadian function. Isoform PML-6 inhibits specifically the activity of the tetrameric form of PKM. The nuclear isoforms (isoform PML-1, isoform PML-2, isoform PML-3, isoform PML-4 and isoform PML-5) in concert with SATB1 are involved in local chromatin-loop remodeling and gene expression regulation at the MHC-I locus. Isoform PML-2 is required for efficient IFN-gamma induced MHC II gene transcription via regulation of CIITA. Cytoplasmic PML is involved in the regulation of the TGF-beta signaling pathway. PML also regulates transcription activity of ELF4 and can act as an important mediator for TNF-alpha- and IFN-alpha-mediated inhibition of endothelial cell network formation and migration. Functionally, exhibits antiviral activity against both DNA and RNA viruses. The antiviral activity can involve one or several isoform(s) and can be enhanced by the permanent PML-NB-associated protein DAXX or by the recruitment of p53/TP53 within these structures. Isoform PML-4 restricts varicella zoster virus (VZV) via sequestration of virion capsids in PML-NBs thereby preventing their nuclear egress and inhibiting formation of infectious virus particles. The sumoylated isoform PML-4 restricts rabies virus by inhibiting viral mRNA and protein synthesis. The cytoplasmic isoform PML-14 can restrict herpes simplex virus-1 (HHV-1) replication by sequestering the viral E3 ubiquitin-protein ligase ICP0 in the cytoplasm. Isoform PML-6 shows restriction activity towards human cytomegalovirus (HHV-5) and influenza A virus strains PR8(H1N1) and ST364(H3N2). Sumoylated isoform PML-4 and isoform PML-12 show antiviral activity against encephalomyocarditis virus (EMCV) by promoting nuclear sequestration of viral polymerase (P3D-POL) within PML NBs. Isoform PML-3 exhibits antiviral activity against poliovirus by inducing apoptosis in infected cells through the recruitment and the activation of p53/TP53 in the PML-NBs. Isoform PML-3 represses human foamy virus (HFV) transcription by complexing the HFV transactivator, bel1/tas, preventing its binding to viral DNA. PML may positively regulate infectious hepatitis C viral (HCV) production and isoform PML-2 may enhance adenovirus transcription. Functions as an E3 SUMO-protein ligase that sumoylates (HHV-5) immediate early protein IE1, thereby participating in the antiviral response. Isoforms PML-3 and PML-6 display the highest levels of sumoylation activity. The polypeptide is Protein PML (PML) (Homo sapiens (Human)).